We begin with the raw amino-acid sequence, 1269 residues long: DNA-directed RNA polymerase subunit beta'' (1269 aa).

4 residues coordinate Zn(2+): cysteine 226, cysteine 301, cysteine 308, and cysteine 311.

It belongs to the RNA polymerase beta' chain family. RpoC2 subfamily. In plastids the minimal PEP RNA polymerase catalytic core is composed of four subunits: alpha, beta, beta', and beta''. When a (nuclear-encoded) sigma factor is associated with the core the holoenzyme is formed, which can initiate transcription. Zn(2+) is required as a cofactor.

It is found in the plastid. The protein resides in the chloroplast. It catalyses the reaction RNA(n) + a ribonucleoside 5'-triphosphate = RNA(n+1) + diphosphate. Functionally, DNA-dependent RNA polymerase catalyzes the transcription of DNA into RNA using the four ribonucleoside triphosphates as substrates. In Cyanidium caldarium (Red alga), this protein is DNA-directed RNA polymerase subunit beta''.